Consider the following 475-residue polypeptide: UDP-glycosyltransferase 1 (475 aa).

His-15 acts as the Proton acceptor in catalysis. His-15 serves as a coordination point for an anthocyanidin. Asp-117 (charge relay) is an active-site residue. UDP-alpha-D-glucose is bound by residues Ala-345, Gln-347, His-362, Trp-365, Asn-366, Ser-367, and Glu-370. Residue Gly-385 participates in an anthocyanidin binding. Positions 386 and 387 each coordinate UDP-alpha-D-glucose.

It belongs to the UDP-glycosyltransferase family. As to expression, mostly expressed in leaves and flowers, and, to a lower extent, in roots and stems.

The enzyme catalyses (20S)-protopanaxadiol + UDP-alpha-D-glucose = (20S)-ginsenoside C-K + UDP + H(+). The catalysed reaction is (20S)-ginsenoside Rg3 + UDP-alpha-D-glucose = (20S)-ginsenoside Rd + UDP + H(+). It catalyses the reaction (20S)-ginsenoside Rh2 + UDP-alpha-D-glucose = (20S)-ginsenoside F2 + UDP + H(+). It carries out the reaction (20S)-protopanaxatriol + UDP-alpha-D-glucose = (20S)-ginsenoside F1 + UDP + H(+). The enzyme catalyses dammarenediol-II + UDP-alpha-D-glucose = (20S)-20-O-(beta-D-glucosyl)-3-hydroxydammarene + UDP + H(+). The protein operates within secondary metabolite biosynthesis; terpenoid biosynthesis. Component of the dammarane-type triterpene saponins (e.g. ginsenosides or panaxosides) biosynthetic pathway. Glycosyltransferase that catalyzes the biosynthesis of ginsenoside F1 from protopanaxatriol (PPT). Triggers C20-OH glycosylation of ginsenoside Rg3 to produce ginsenoside Rd. Mediates the conversion of protopanaxadiol (PPD) to the ginsenoside compound K. catalyzes the production of 20S-O-beta-(D-glucosyl)-dammarenediol II form dammarenediol II (DM). This Panax ginseng (Korean ginseng) protein is UDP-glycosyltransferase 1.